The primary structure comprises 248 residues: Lysine-rich arabinogalactan protein 19 (248 aa).

The signal sequence occupies residues 1–24; sequence MESNSIIWSLLLASALISSFSVNA. Residues 25-37 are compositionally biased toward low complexity; sequence QGPAASPVTSTTT. The disordered stretch occupies residues 25–221; that stretch reads QGPAASPVTS…APSPNTNGGN (197 aa). Composition is skewed to pro residues over residues 38–57, 67–86, and 94–171; these read APPPTTAAPPTTAAPPPTTT, PASPVTPPPAVTPTSPPAPK, and ATPP…PAPA. The segment covering 173–187 has biased composition (basic residues); sequence TKHKRKHKHKRHHHA. The span at 189 to 203 shows a compositional bias: pro residues; that stretch reads APAPIPPSPPSPPVL. S196 carries GPI-anchor amidated serine lipidation. A propeptide spans 197-248 (removed in mature form); the sequence is PPSPPVLTDPQDTAPAPSPNTNGGNALNQLKGRAVMWLNTGLVILFLLAMTA.

Belongs to the lysine-rich AGP family. In terms of processing, O-glycosylated on the hydroxyproline residues. As to expression, strongly expressed in stems, moderately expressed in flowers and roots and weakly expressed in young leaves.

The protein localises to the cell membrane. In terms of biological role, proteoglycan that seems to be implicated in diverse developmental roles such as differentiation, cell-cell recognition, embryogenesis and programmed cell death. In Arabidopsis thaliana (Mouse-ear cress), this protein is Lysine-rich arabinogalactan protein 19 (AGP19).